Consider the following 111-residue polypeptide: Putative single-stranded DNA-binding protein ycf41 (111 aa).

Positions 1–98 (MNSCTLLVQI…FSTSRIFKYK (98 aa)) constitute an SSB domain.

Its subcellular location is the plastid. It localises to the chloroplast. The protein is Putative single-stranded DNA-binding protein ycf41 (ycf41) of Pyropia yezoensis (Susabi-nori).